A 282-amino-acid polypeptide reads, in one-letter code: Proteasome subunit beta (282 aa).

Positions 1 to 55 (MDNSSTGRYPAASLPPAYLRPGSSSFTDFLRAQAPELLPTARSFPEGSVVQAAHG) are cleaved as a propeptide — removed in mature form; by autocatalysis. The active-site Nucleophile is Thr56.

It belongs to the peptidase T1B family. As to quaternary structure, the 20S proteasome core is composed of 14 alpha and 14 beta subunits that assemble into four stacked heptameric rings, resulting in a barrel-shaped structure. The two inner rings, each composed of seven catalytic beta subunits, are sandwiched by two outer rings, each composed of seven alpha subunits. The catalytic chamber with the active sites is on the inside of the barrel. Has a gated structure, the ends of the cylinder being occluded by the N-termini of the alpha-subunits. Is capped by the proteasome-associated ATPase, ARC.

Its subcellular location is the cytoplasm. It carries out the reaction Cleavage of peptide bonds with very broad specificity.. The protein operates within protein degradation; proteasomal Pup-dependent pathway. With respect to regulation, the formation of the proteasomal ATPase ARC-20S proteasome complex, likely via the docking of the C-termini of ARC into the intersubunit pockets in the alpha-rings, may trigger opening of the gate for substrate entry. Interconversion between the open-gate and close-gate conformations leads to a dynamic regulation of the 20S proteasome proteolysis activity. Functionally, component of the proteasome core, a large protease complex with broad specificity involved in protein degradation. The chain is Proteasome subunit beta from Actinosynnema mirum (strain ATCC 29888 / DSM 43827 / JCM 3225 / NBRC 14064 / NCIMB 13271 / NRRL B-12336 / IMRU 3971 / 101).